Consider the following 542-residue polypeptide: CTP synthase (542 aa).

The tract at residues 1–265 is amidoligase domain; it reads MARYVFITGG…DNEVLAAFGI (265 aa). Serine 13 is a CTP binding site. UTP is bound at residue serine 13. ATP is bound by residues 14–19 and aspartate 71; that span reads SLGKGI. 2 residues coordinate Mg(2+): aspartate 71 and glutamate 139. Residues 146–148, 186–191, and lysine 222 contribute to the CTP site; these read DIE and KTKPTQ. UTP contacts are provided by residues 186 to 191 and lysine 222; that span reads KTKPTQ. In terms of domain architecture, Glutamine amidotransferase type-1 spans 291 to 541; it reads TIAIVGKYTG…IEAALEQSRL (251 aa). Glycine 353 is a binding site for L-glutamine. The active-site Nucleophile; for glutamine hydrolysis is cysteine 380. L-glutamine contacts are provided by residues 381 to 384, glutamate 404, and arginine 469; that span reads FGMQ. Catalysis depends on residues histidine 514 and glutamate 516.

Belongs to the CTP synthase family. In terms of assembly, homotetramer.

The enzyme catalyses UTP + L-glutamine + ATP + H2O = CTP + L-glutamate + ADP + phosphate + 2 H(+). It carries out the reaction L-glutamine + H2O = L-glutamate + NH4(+). The catalysed reaction is UTP + NH4(+) + ATP = CTP + ADP + phosphate + 2 H(+). It functions in the pathway pyrimidine metabolism; CTP biosynthesis via de novo pathway; CTP from UDP: step 2/2. Allosterically activated by GTP, when glutamine is the substrate; GTP has no effect on the reaction when ammonia is the substrate. The allosteric effector GTP functions by stabilizing the protein conformation that binds the tetrahedral intermediate(s) formed during glutamine hydrolysis. Inhibited by the product CTP, via allosteric rather than competitive inhibition. Functionally, catalyzes the ATP-dependent amination of UTP to CTP with either L-glutamine or ammonia as the source of nitrogen. Regulates intracellular CTP levels through interactions with the four ribonucleotide triphosphates. The protein is CTP synthase of Sinorhizobium medicae (strain WSM419) (Ensifer medicae).